Here is a 1119-residue protein sequence, read N- to C-terminus: DNA-directed RNA polymerase subunit beta (1119 aa).

This sequence belongs to the RNA polymerase beta chain family. In terms of assembly, the RNAP catalytic core consists of 2 alpha, 1 beta, 1 beta' and 1 omega subunit. When a sigma factor is associated with the core the holoenzyme is formed, which can initiate transcription.

It carries out the reaction RNA(n) + a ribonucleoside 5'-triphosphate = RNA(n+1) + diphosphate. Its function is as follows. DNA-dependent RNA polymerase catalyzes the transcription of DNA into RNA using the four ribonucleoside triphosphates as substrates. The chain is DNA-directed RNA polymerase subunit beta from Thermus aquaticus.